The sequence spans 197 residues: Imidazoleglycerol-phosphate dehydratase (197 aa).

This sequence belongs to the imidazoleglycerol-phosphate dehydratase family.

Its subcellular location is the cytoplasm. It carries out the reaction D-erythro-1-(imidazol-4-yl)glycerol 3-phosphate = 3-(imidazol-4-yl)-2-oxopropyl phosphate + H2O. Its pathway is amino-acid biosynthesis; L-histidine biosynthesis; L-histidine from 5-phospho-alpha-D-ribose 1-diphosphate: step 6/9. This is Imidazoleglycerol-phosphate dehydratase from Rhodopseudomonas palustris (strain BisB5).